A 161-amino-acid polypeptide reads, in one-letter code: Endoribonuclease YbeY (161 aa).

Residues His127, His131, and His137 each contribute to the Zn(2+) site.

It belongs to the endoribonuclease YbeY family. Zn(2+) serves as cofactor.

It is found in the cytoplasm. Single strand-specific metallo-endoribonuclease involved in late-stage 70S ribosome quality control and in maturation of the 3' terminus of the 16S rRNA. In Listeria welshimeri serovar 6b (strain ATCC 35897 / DSM 20650 / CCUG 15529 / CIP 8149 / NCTC 11857 / SLCC 5334 / V8), this protein is Endoribonuclease YbeY.